A 347-amino-acid polypeptide reads, in one-letter code: Isopentenyl-diphosphate delta-isomerase (347 aa).

Position 9–10 (9–10) interacts with substrate; the sequence is RK. FMN is bound by residues Ser-67, 68–70, Ser-98, and Asn-127; that span reads SMT. 98–100 provides a ligand contact to substrate; the sequence is SQR. Residue Gln-162 coordinates substrate. Residue Glu-163 participates in Mg(2+) binding. FMN contacts are provided by residues Lys-194, Thr-224, 274–276, and 295–296; these read GIK and AA.

It belongs to the IPP isomerase type 2 family. In terms of assembly, homooctamer. Dimer of tetramers. Requires FMN as cofactor. The cofactor is NADPH. Mg(2+) serves as cofactor.

It localises to the cytoplasm. It catalyses the reaction isopentenyl diphosphate = dimethylallyl diphosphate. Functionally, involved in the biosynthesis of isoprenoids. Catalyzes the 1,3-allylic rearrangement of the homoallylic substrate isopentenyl (IPP) to its allylic isomer, dimethylallyl diphosphate (DMAPP). The chain is Isopentenyl-diphosphate delta-isomerase from Pseudescherichia vulneris (Escherichia vulneris).